The primary structure comprises 504 residues: ATP synthase subunit beta (504 aa).

181-188 (GGAGVGKT) is an ATP binding site.

This sequence belongs to the ATPase alpha/beta chains family. As to quaternary structure, F-type ATPases have 2 components, CF(1) - the catalytic core - and CF(0) - the membrane proton channel. CF(1) has five subunits: alpha(3), beta(3), gamma(1), delta(1), epsilon(1). CF(0) has three main subunits: a(1), b(2) and c(9-12). The alpha and beta chains form an alternating ring which encloses part of the gamma chain. CF(1) is attached to CF(0) by a central stalk formed by the gamma and epsilon chains, while a peripheral stalk is formed by the delta and b chains.

The protein resides in the cell inner membrane. It carries out the reaction ATP + H2O + 4 H(+)(in) = ADP + phosphate + 5 H(+)(out). Its function is as follows. Produces ATP from ADP in the presence of a proton gradient across the membrane. The catalytic sites are hosted primarily by the beta subunits. The polypeptide is ATP synthase subunit beta (Ehrlichia ruminantium (strain Gardel)).